Consider the following 274-residue polypeptide: Putative pyruvate, phosphate dikinase regulatory protein (274 aa).

Residue 151–158 (GVSRTSKT) participates in ADP binding.

This sequence belongs to the pyruvate, phosphate/water dikinase regulatory protein family. PDRP subfamily.

It catalyses the reaction N(tele)-phospho-L-histidyl/L-threonyl-[pyruvate, phosphate dikinase] + ADP = N(tele)-phospho-L-histidyl/O-phospho-L-threonyl-[pyruvate, phosphate dikinase] + AMP + H(+). The catalysed reaction is N(tele)-phospho-L-histidyl/O-phospho-L-threonyl-[pyruvate, phosphate dikinase] + phosphate + H(+) = N(tele)-phospho-L-histidyl/L-threonyl-[pyruvate, phosphate dikinase] + diphosphate. Its function is as follows. Bifunctional serine/threonine kinase and phosphorylase involved in the regulation of the pyruvate, phosphate dikinase (PPDK) by catalyzing its phosphorylation/dephosphorylation. The polypeptide is Putative pyruvate, phosphate dikinase regulatory protein (Pelagibacter ubique (strain HTCC1062)).